Reading from the N-terminus, the 135-residue chain is Succinate dehydrogenase assembly factor 3, mitochondrial (135 aa).

Residues 73 to 101 (KENSNNNDNYNNNNNDNNNDNNNFINIGQ) form a disordered region. Low complexity predominate over residues 75–95 (NSNNNDNYNNNNNDNNNDNNN).

It belongs to the complex I LYR family. SDHAF3 subfamily. In terms of assembly, interacts with the iron-sulfur protein subunit within the SDH catalytic dimer.

The protein localises to the mitochondrion matrix. Plays an essential role in the assembly of succinate dehydrogenase (SDH), an enzyme complex (also referred to as respiratory complex II) that is a component of both the tricarboxylic acid (TCA) cycle and the mitochondrial electron transport chain, and which couples the oxidation of succinate to fumarate with the reduction of ubiquinone (coenzyme Q) to ubiquinol. Promotes maturation of the iron-sulfur protein subunit of the SDH catalytic dimer, protecting it from the deleterious effects of oxidants. May act together with SDHAF1. This is Succinate dehydrogenase assembly factor 3, mitochondrial (acn9) from Dictyostelium discoideum (Social amoeba).